Consider the following 407-residue polypeptide: Argininosuccinate synthase (407 aa).

ATP is bound by residues 12–20 and Ala39; that span reads AYSGGLDTS. Tyr92 and Ser97 together coordinate L-citrulline. Gly122 is an ATP binding site. Positions 124, 128, and 129 each coordinate L-aspartate. Asn128 contacts L-citrulline. Residues Arg132, Ser183, Ser192, Glu268, and Tyr280 each coordinate L-citrulline.

It belongs to the argininosuccinate synthase family. Type 1 subfamily. Homotetramer.

Its subcellular location is the cytoplasm. It carries out the reaction L-citrulline + L-aspartate + ATP = 2-(N(omega)-L-arginino)succinate + AMP + diphosphate + H(+). It functions in the pathway amino-acid biosynthesis; L-arginine biosynthesis; L-arginine from L-ornithine and carbamoyl phosphate: step 2/3. The protein is Argininosuccinate synthase of Caulobacter sp. (strain K31).